The sequence spans 116 residues: Large ribosomal subunit protein uL22c (116 aa).

It belongs to the universal ribosomal protein uL22 family. Part of the 50S ribosomal subunit.

It localises to the plastid. It is found in the chloroplast. Functionally, this protein binds specifically to 23S rRNA. Its function is as follows. The globular domain of the protein is located near the polypeptide exit tunnel on the outside of the subunit, while an extended beta-hairpin is found that lines the wall of the exit tunnel in the center of the 70S ribosome. The protein is Large ribosomal subunit protein uL22c (rpl22) of Psilotum nudum (Whisk fern).